The following is a 137-amino-acid chain: Small ribosomal subunit protein bS6 (137 aa).

Residues I96–E137 form a disordered region. Over residues K104–E137 the composition is skewed to basic and acidic residues.

This sequence belongs to the bacterial ribosomal protein bS6 family.

Its function is as follows. Binds together with bS18 to 16S ribosomal RNA. The sequence is that of Small ribosomal subunit protein bS6 from Shewanella piezotolerans (strain WP3 / JCM 13877).